A 725-amino-acid polypeptide reads, in one-letter code: Methionine--tRNA ligase (725 aa).

Residues 27–37 (PYANGQIHIGH) carry the 'HIGH' region motif. Positions 158, 161, 171, and 174 each coordinate Zn(2+). A 'KMSKS' region motif is present at residues 348 to 352 (KMSKS). Lys-351 provides a ligand contact to ATP. Residues 619 to 725 (DFAKIDLRIA…SGAKPGMRVK (107 aa)) enclose the tRNA-binding domain.

Belongs to the class-I aminoacyl-tRNA synthetase family. MetG type 1 subfamily. As to quaternary structure, homodimer. Zn(2+) is required as a cofactor.

The protein localises to the cytoplasm. It carries out the reaction tRNA(Met) + L-methionine + ATP = L-methionyl-tRNA(Met) + AMP + diphosphate. Functionally, is required not only for elongation of protein synthesis but also for the initiation of all mRNA translation through initiator tRNA(fMet) aminoacylation. This chain is Methionine--tRNA ligase, found in Burkholderia pseudomallei (strain 1710b).